The following is an 887-amino-acid chain: Exosome complex component 10 (887 aa).

Basic and acidic residues predominate over residues 1–10 (MAPPSPREHQ). Residues 1 to 23 (MAPPSPREHQSAPATSATKPDAE) form a disordered region. Lys19 is covalently cross-linked (Glycyl lysine isopeptide (Lys-Gly) (interchain with G-Cter in SUMO2)). Residues 289-455 (HLVSSLDELV…YIYDRMRLEL (167 aa)) enclose the 3'-5' exonuclease domain. Mg(2+)-binding residues include Asp313, Glu315, Asp371, and Asp440. Residues 503–583 (NSQQLTAFQL…QQAREMPLLK (81 aa)) form the HRDC domain. Residue Lys583 forms a Glycyl lysine isopeptide (Lys-Gly) (interchain with G-Cter in SUMO1); alternate linkage. Lys583 is covalently cross-linked (Glycyl lysine isopeptide (Lys-Gly) (interchain with G-Cter in SUMO2); alternate). Lys710 participates in a covalent cross-link: Glycyl lysine isopeptide (Lys-Gly) (interchain with G-Cter in SUMO2). 2 disordered regions span residues 734-757 (KEPKEATKKKVAEQTAAREEAKEE) and 777-887 (NATK…WPKR). Over residues 778 to 796 (ATKKRERATSDLRTIEQKQ) the composition is skewed to basic and acidic residues. Ser823 carries the phosphoserine modification. Glycyl lysine isopeptide (Lys-Gly) (interchain with G-Cter in SUMO2) cross-links involve residues Lys835, Lys861, and Lys875.

This sequence belongs to the exosome component 10/RRP6 family. In terms of assembly, component of the RNA exosome complex. The catalytically inactive RNA exosome core complex (Exo-9) associates with the catalytic subunit EXOSC10/RRP6 (via its N-terminus). Exo-9 may associate with DIS3 to form the nucleolar exosome complex, or DIS3L to form the cytoplasmic exosome complex. The RNA exosome complex interacts with cofactors C1D/RRP47, MPHOSPH6/MPP6 and MTREX/MTR4. Interacts with MTREX; the interaction with MTREX mediates the association of MTREX with nuclear RNA exosomes. Part of the small subunit (SSU) processome, composed of more than 70 proteins and the RNA chaperone small nucleolar RNA (snoRNA) U3. Interacts with ALYREF/THOC4. Interacts with DHX36; this interaction occurs in a RNase-insensitive manner. Interacts with NRDE2. Interacts (via C-terminus) with USP36 (via C-terminus); the interaction is facilitated by the association with RNA and promotes sumoylation of EXOSC10. Mg(2+) serves as cofactor. Sumoylated by USP36; sumoylation does not significantly affect EXOSC10 nucleolar localization and association with core exosome and USP36, but regulates the nucleolar RNA exosome activity in rRNA processing by promoting binding of EXOSC10 to pre-rRNAs. Effects of sumoylation on EXOSC10 levels vary between different studies. Sumoylation of EXOSC10 is required for the modulation of EXOSC10 effects on cellular protein translation and cell proliferation. Sumoylation is promoted by mild hypothermia. As to expression, expressed in ovary (at protein level). Expressed in testis (at protein level). Expressed in lung (at protein level).

It localises to the cytoplasm. It is found in the nucleus. Its subcellular location is the nucleolus. The protein resides in the nucleoplasm. Its function is as follows. Catalytic component of the RNA exosome complex which has 3'-&gt;5' exoribonuclease activity and participates in a multitude of cellular RNA processing and degradation events. In the nucleus, the RNA exosome complex is involved in proper maturation of stable RNA species such as rRNA, snRNA and snoRNA, in the elimination of RNA processing by-products and non-coding 'pervasive' transcripts, such as antisense RNA species and promoter-upstream transcripts (PROMPTs), and of mRNAs with processing defects, thereby limiting or excluding their export to the cytoplasm. Part of the small subunit (SSU) processome, first precursor of the small eukaryotic ribosomal subunit. During the assembly of the SSU processome in the nucleolus, many ribosome biogenesis factors, an RNA chaperone and ribosomal proteins associate with the nascent pre-rRNA and work in concert to generate RNA folding, modifications, rearrangements and cleavage as well as targeted degradation of pre-ribosomal RNA by the RNA exosome. The RNA exosome may be involved in Ig class switch recombination (CSR) and/or Ig variable region somatic hypermutation (SHM) by targeting AICDA deamination activity to transcribed dsDNA substrates. In the cytoplasm, the RNA exosome complex is involved in general mRNA turnover and specifically degrades inherently unstable mRNAs containing AU-rich elements (AREs) within their 3' untranslated regions, and in RNA surveillance pathways, preventing translation of aberrant mRNAs. It seems to be involved in degradation of histone mRNA. EXOSC10 is required for nucleolar localization of C1D and probably mediates the association of MTREX, C1D and MPHOSPH6 with the RNA exosome involved in the maturation of 5.8S rRNA. Plays a role in the recruitment of replication protein A complex (RPA) and RAD51 to DNA double-strand breaks caused by irradiation, contributing to DNA repair by homologous recombination. Regulates levels of damage-induced RNAs in order to prevent DNA-RNA hybrid formation at DNA double-strand breaks and limit DNA end resection after damage. Plays a role in oocyte development, maturation and survival. Required for normal testis development and mitotic division of spermatogonia. Plays a role in proper embryo development. Required for global protein translation. Required for cell proliferation. This is Exosome complex component 10 (Exosc10) from Mus musculus (Mouse).